Consider the following 125-residue polypeptide: Late histone H2A.1 (125 aa).

The span at 1 to 18 shows a compositional bias: basic residues; sequence MSGRGKGKAKGTKSKTRS. The disordered stretch occupies residues 1–21; sequence MSGRGKGKAKGTKSKTRSSRA. Ser2 is subject to N-acetylserine. Ser2 carries the phosphoserine modification. An N5-methylglutamine modification is found at Gln104. Residue Lys119 forms a Glycyl lysine isopeptide (Lys-Gly) (interchain with G-Cter in ubiquitin) linkage.

This sequence belongs to the histone H2A family. As to quaternary structure, the nucleosome is a histone octamer containing two molecules each of H2A, H2B, H3 and H4 assembled in one H3-H4 heterotetramer and two H2A-H2B heterodimers. The octamer wraps approximately 147 bp of DNA. Monoubiquitination of Lys-119 gives a specific tag for epigenetic transcriptional repression. Post-translationally, phosphorylation of Ser-2 directly represses transcription.

The protein resides in the nucleus. It is found in the chromosome. Its function is as follows. Core component of nucleosome. Nucleosomes wrap and compact DNA into chromatin, limiting DNA accessibility to the cellular machineries which require DNA as a template. Histones thereby play a central role in transcription regulation, DNA repair, DNA replication and chromosomal stability. DNA accessibility is regulated via a complex set of post-translational modifications of histones, also called histone code, and nucleosome remodeling. The sequence is that of Late histone H2A.1 from Psammechinus miliaris (Green sea urchin).